A 518-amino-acid chain; its full sequence is uncharacterized protein (518 aa).

14 helical membrane-spanning segments follow: residues 13-33 (WAIS…GIIS), 49-69 (WGSW…PIVG), 86-106 (CLFG…LFLI), 109-129 (LIQA…ILAT), 141-161 (LLGA…SFLL), 169-189 (WLFL…ACFI), 202-222 (AAGI…MTNL), 231-251 (LGNP…AALI), 280-300 (LIIG…PSYV), 312-332 (GYWM…GGAL), 341-361 (TVIL…LWVT), 365-385 (EFVI…GAPL), 410-430 (IGLT…FDQI), and 493-513 (LYAA…IPAF).

The protein belongs to the major facilitator superfamily. TCR/Tet family.

The protein resides in the cell membrane. This is an uncharacterized protein from Bacillus subtilis (strain 168).